The chain runs to 131 residues: Small ribosomal subunit protein uS11 (131 aa).

This sequence belongs to the universal ribosomal protein uS11 family. Part of the 30S ribosomal subunit. Interacts with proteins S7 and S18. Binds to IF-3.

Its function is as follows. Located on the platform of the 30S subunit, it bridges several disparate RNA helices of the 16S rRNA. Forms part of the Shine-Dalgarno cleft in the 70S ribosome. This chain is Small ribosomal subunit protein uS11, found in Exiguobacterium sp. (strain ATCC BAA-1283 / AT1b).